The chain runs to 240 residues: Phosphoribosylaminoimidazole-succinocarboxamide synthase (240 aa).

Belongs to the SAICAR synthetase family.

The enzyme catalyses 5-amino-1-(5-phospho-D-ribosyl)imidazole-4-carboxylate + L-aspartate + ATP = (2S)-2-[5-amino-1-(5-phospho-beta-D-ribosyl)imidazole-4-carboxamido]succinate + ADP + phosphate + 2 H(+). The protein operates within purine metabolism; IMP biosynthesis via de novo pathway; 5-amino-1-(5-phospho-D-ribosyl)imidazole-4-carboxamide from 5-amino-1-(5-phospho-D-ribosyl)imidazole-4-carboxylate: step 1/2. The protein is Phosphoribosylaminoimidazole-succinocarboxamide synthase of Wigglesworthia glossinidia brevipalpis.